Reading from the N-terminus, the 522-residue chain is Tetratricopeptide repeat and J domain-containing co-chaperone DNJ1 (522 aa).

The N-terminal stretch at 1–22 (MKGFLLVALPVLFLSLSTQVFG) is a signal peptide. 7 TPR repeats span residues 29 to 62 (AAQI…DPTG), 63 to 96 (YANY…NPGF), 97 to 130 (VQAH…KSDS), 142 to 175 (GEAA…GPNS), 210 to 243 (TYLP…DPDS), 256 to 289 (LEKD…LVRF), and 356 to 389 (VDSW…SGRS). The region spanning 410-471 (DYYKVLGVPR…ELRQRYDNGD (62 aa)) is the J domain. Residues 465–494 (QRYDNGDDPNDPTGGQQHNPFAHHGGGMPF) are disordered.

The protein localises to the endoplasmic reticulum lumen. Endoplasmic reticulum co-chaperone crucial for survival and virulence factor production at elevated temperatures representative of febrile patients during infection. Contributes to virulence in a mouse model of cryptococcosis. With chaperone CNE1, coordinately maintains ER homeostasis and contributes to maintenance of cell wall architecture. This Cryptococcus neoformans var. grubii serotype A (strain H99 / ATCC 208821 / CBS 10515 / FGSC 9487) (Filobasidiella neoformans var. grubii) protein is Tetratricopeptide repeat and J domain-containing co-chaperone DNJ1.